A 314-amino-acid polypeptide reads, in one-letter code: MMALQSTRDPKEFGRVAVLFGGKSAEREVSLKSGAAVLAALQAAGVDAFGIDAGDDLLQRLSSERIDRAFIVLHGRGGEDGSMQGLLECAGIPYTGSGILASALAMDKLRTKQVWQSLGLPTPRHAVLASEVDCQAAAQMLGFPLIVKPAHEGSSIGMAKVGDVAELIAAWRAASAYDAQVLVEQWIQGPEFTVAVLHGEVLPPIGLGTPHTFYDYDAKYLASDTQYRIPCGLDAAREEALKVLSARACEAVGIRGWARVDVMQDAEGNFWLLEVNTVPGMTDHSLVPMAARAAGLDFQQLVLSILDDSLEAGN.

Residues 112–307 (KQVWQSLGLP…FQQLVLSILD (196 aa)) enclose the ATP-grasp domain. 138 to 193 (AQMLGFPLIVKPAHEGSSIGMAKVGDVAELIAAWRAASAYDAQVLVEQWIQGPEFT) is an ATP binding site. D261, E274, and N276 together coordinate Mg(2+).

This sequence belongs to the D-alanine--D-alanine ligase family. The cofactor is Mg(2+). Mn(2+) serves as cofactor.

The protein localises to the cytoplasm. The enzyme catalyses 2 D-alanine + ATP = D-alanyl-D-alanine + ADP + phosphate + H(+). Its pathway is cell wall biogenesis; peptidoglycan biosynthesis. In terms of biological role, cell wall formation. The protein is D-alanine--D-alanine ligase of Stutzerimonas stutzeri (strain A1501) (Pseudomonas stutzeri).